Consider the following 977-residue polypeptide: GAS2-like protein pickled eggs (977 aa).

Residues 20 to 159 (EAMREDLAEW…CLLEVARRGA (140 aa)) form the Calponin-homology (CH) domain. Residues 218 to 245 (VETDLYDDSDDSETEDDGDQNPVLMYGP) form a disordered region. The segment covering 221–236 (DLYDDSDDSETEDDGD) has biased composition (acidic residues). The GAR domain maps to 252-324 (NDLKSLDEMV…HYLDKHDPCR (73 aa)). Disordered regions lie at residues 397–543 (PTLQ…SEIS), 557–624 (AQKR…VCDG), 666–685 (VANTMGNPTPNLSKIPRSPL), 693–803 (IDNS…KGRS), and 910–977 (NLER…TELY). 2 stretches are compositionally biased toward polar residues: residues 399 to 428 (LQNGHSLSPNSGKYRSRSPTPQRKFLNQQA) and 436 to 454 (ATGSSQTVTTDTSSGQLLG). Positions 502-527 (GGSGVGSAAGGVSSGSAGSGVAGEQG) are enriched in gly residues. A compositionally biased stretch (polar residues) spans 577–589 (RLDQTSSDSQISP). Acidic residues predominate over residues 601 to 620 (ILEEEDLNGQDREEDQEDYS). Composition is skewed to polar residues over residues 666-677 (VANTMGNPTPNL) and 731-741 (TRNSTGATTTP). Positions 928–953 (SSAASSCESNNSNAGAGSGAAAGSAS) are enriched in low complexity.

Belongs to the GAS2 family. In terms of tissue distribution, expressed in the ovary and the ring canals of the germline cells. In larvae, expressed in the notal region of the wing disk.

The protein localises to the cytoplasm. Its subcellular location is the cytoskeleton. It localises to the cell cortex. Functionally, essential for development and viability. Required for ovary development and oogenesis, and is essential for the development of the indirect flight muscles. May act as a negative regulator of the Notch signaling pathway in certain tissues, such as the muscle precursors and ovaries. May function as a linker protein between the actin and microtubule cytoskeletons. The protein is GAS2-like protein pickled eggs of Drosophila melanogaster (Fruit fly).